A 159-amino-acid chain; its full sequence is NADH-quinone oxidoreductase subunit B (159 aa).

The [4Fe-4S] cluster site is built by Cys-32, Cys-33, Cys-97, and Cys-126.

The protein belongs to the complex I 20 kDa subunit family. As to quaternary structure, NDH-1 is composed of 14 different subunits. Subunits NuoB, C, D, E, F, and G constitute the peripheral sector of the complex. [4Fe-4S] cluster serves as cofactor.

The protein localises to the cell inner membrane. It carries out the reaction a quinone + NADH + 5 H(+)(in) = a quinol + NAD(+) + 4 H(+)(out). In terms of biological role, NDH-1 shuttles electrons from NADH, via FMN and iron-sulfur (Fe-S) centers, to quinones in the respiratory chain. The immediate electron acceptor for the enzyme in this species is believed to be ubiquinone. Couples the redox reaction to proton translocation (for every two electrons transferred, four hydrogen ions are translocated across the cytoplasmic membrane), and thus conserves the redox energy in a proton gradient. The protein is NADH-quinone oxidoreductase subunit B of Helicobacter pylori (strain P12).